The sequence spans 156 residues: Arginine repressor (156 aa).

This sequence belongs to the ArgR family.

It is found in the cytoplasm. It participates in amino-acid biosynthesis; L-arginine biosynthesis [regulation]. Regulates arginine biosynthesis genes. The polypeptide is Arginine repressor (Vibrio atlanticus (strain LGP32) (Vibrio splendidus (strain Mel32))).